The primary structure comprises 99 residues: NADH-quinone oxidoreductase subunit K (99 aa).

The next 3 helical transmembrane spans lie at 3-23 (PDNYLYLAALIFTIGAAGVML), 28-48 (IVVFMSVELMLNAANLAFVTF), and 59-79 (VIAFFTMVVAATEVVVGLGII).

The protein belongs to the complex I subunit 4L family. NDH-1 is composed of 14 different subunits. Subunits NuoA, H, J, K, L, M, N constitute the membrane sector of the complex.

The protein localises to the cell membrane. The enzyme catalyses a quinone + NADH + 5 H(+)(in) = a quinol + NAD(+) + 4 H(+)(out). Its function is as follows. NDH-1 shuttles electrons from NADH, via FMN and iron-sulfur (Fe-S) centers, to quinones in the respiratory chain. The immediate electron acceptor for the enzyme in this species is believed to be a menaquinone. Couples the redox reaction to proton translocation (for every two electrons transferred, four hydrogen ions are translocated across the cytoplasmic membrane), and thus conserves the redox energy in a proton gradient. This is NADH-quinone oxidoreductase subunit K from Mycobacteroides abscessus (strain ATCC 19977 / DSM 44196 / CCUG 20993 / CIP 104536 / JCM 13569 / NCTC 13031 / TMC 1543 / L948) (Mycobacterium abscessus).